A 510-amino-acid polypeptide reads, in one-letter code: Beta-glucosidase 26 (510 aa).

Residues 1–27 form the signal peptide; the sequence is MRKFIAALRLALAAAAHLLLTLPPAQC. Residue Q59 coordinates a beta-D-glucoside. N87 and N127 each carry an N-linked (GlcNAc...) asparagine glycan. A beta-D-glucoside-binding positions include H160 and 205-206; that span reads NE. The active-site Proton donor is the E206. A disulfide bridge connects residues C225 and C228. An N-linked (GlcNAc...) asparagine glycan is attached at N233. Y345 and E416 together coordinate a beta-D-glucoside. The Nucleophile role is filled by E416. The N-linked (GlcNAc...) asparagine glycan is linked to N424. A beta-D-glucoside-binding positions include W463, 470 to 471, and F479; that span reads EW.

It belongs to the glycosyl hydrolase 1 family.

The catalysed reaction is Hydrolysis of terminal, non-reducing beta-D-glucosyl residues with release of beta-D-glucose.. Its function is as follows. Hydrolyzes p-nitrophenyl beta-D-glucoside, p-nitrophenyl beta-D-mannoside, p-nitrophenyl beta-D-galactoside, p-nitrophenyl beta-D-xyloside, p-nitrophenyl beta-D-fucoside, p-nitrophenyl beta-L-arabinoside, cello-oligosaccharides, laminari-oligosaccharides and sophorose. This Oryza sativa subsp. japonica (Rice) protein is Beta-glucosidase 26 (BGLU26).